A 261-amino-acid polypeptide reads, in one-letter code: tRNA pseudouridine synthase A (261 aa).

The active-site Nucleophile is the aspartate 53. Residue tyrosine 111 participates in substrate binding.

This sequence belongs to the tRNA pseudouridine synthase TruA family. In terms of assembly, homodimer.

It carries out the reaction uridine(38/39/40) in tRNA = pseudouridine(38/39/40) in tRNA. Its function is as follows. Formation of pseudouridine at positions 38, 39 and 40 in the anticodon stem and loop of transfer RNAs. In Shouchella clausii (strain KSM-K16) (Alkalihalobacillus clausii), this protein is tRNA pseudouridine synthase A.